We begin with the raw amino-acid sequence, 214 residues long: RNA pyrophosphohydrolase (214 aa).

The region spanning 6–149 (GFRPNVGIIL…KRDVYQLALT (144 aa)) is the Nudix hydrolase domain. The Nudix box motif lies at 38–59 (GGIKYGETPMQAMYRELHEETG).

Belongs to the Nudix hydrolase family. RppH subfamily. It depends on a divalent metal cation as a cofactor.

Functionally, accelerates the degradation of transcripts by removing pyrophosphate from the 5'-end of triphosphorylated RNA, leading to a more labile monophosphorylated state that can stimulate subsequent ribonuclease cleavage. This Burkholderia orbicola (strain MC0-3) protein is RNA pyrophosphohydrolase.